Here is a 280-residue protein sequence, read N- to C-terminus: Acetyl-coenzyme A carboxylase carboxyl transferase subunit beta (280 aa).

In terms of domain architecture, CoA carboxyltransferase N-terminal spans 28–280 (LFLACPYCGA…IVRLHTAEAE (253 aa)). The Zn(2+) site is built by cysteine 32, cysteine 35, cysteine 50, and cysteine 53. Residues 32–53 (CPYCGAQMYNKQLGKYRVCAKC) form a C4-type zinc finger.

This sequence belongs to the AccD/PCCB family. As to quaternary structure, acetyl-CoA carboxylase is a heterohexamer composed of biotin carboxyl carrier protein (AccB), biotin carboxylase (AccC) and two subunits each of ACCase subunit alpha (AccA) and ACCase subunit beta (AccD). Zn(2+) is required as a cofactor.

The protein localises to the cytoplasm. It catalyses the reaction N(6)-carboxybiotinyl-L-lysyl-[protein] + acetyl-CoA = N(6)-biotinyl-L-lysyl-[protein] + malonyl-CoA. Its pathway is lipid metabolism; malonyl-CoA biosynthesis; malonyl-CoA from acetyl-CoA: step 1/1. Functionally, component of the acetyl coenzyme A carboxylase (ACC) complex. Biotin carboxylase (BC) catalyzes the carboxylation of biotin on its carrier protein (BCCP) and then the CO(2) group is transferred by the transcarboxylase to acetyl-CoA to form malonyl-CoA. This is Acetyl-coenzyme A carboxylase carboxyl transferase subunit beta from Leuconostoc mesenteroides subsp. mesenteroides (strain ATCC 8293 / DSM 20343 / BCRC 11652 / CCM 1803 / JCM 6124 / NCDO 523 / NBRC 100496 / NCIMB 8023 / NCTC 12954 / NRRL B-1118 / 37Y).